The sequence spans 189 residues: Interferon alpha-16 (189 aa).

A signal peptide spans 1-23 (MALSFSLLMAVLVLSYKSICSLG). Intrachain disulfides connect Cys24–Cys122 and Cys52–Cys162.

This sequence belongs to the alpha/beta interferon family.

It localises to the secreted. Its function is as follows. Produced by macrophages, IFN-alpha have antiviral activities. Interferon stimulates the production of two enzymes: a protein kinase and an oligoadenylate synthetase. In Homo sapiens (Human), this protein is Interferon alpha-16 (IFNA16).